The chain runs to 186 residues: Ribosome-recycling factor (186 aa).

This sequence belongs to the RRF family.

The protein resides in the cytoplasm. Its function is as follows. Responsible for the release of ribosomes from messenger RNA at the termination of protein biosynthesis. May increase the efficiency of translation by recycling ribosomes from one round of translation to another. The protein is Ribosome-recycling factor of Porphyromonas gingivalis (strain ATCC BAA-308 / W83).